The primary structure comprises 292 residues: Porphobilinogen deaminase (292 aa).

C236 is subject to S-(dipyrrolylmethanemethyl)cysteine.

Belongs to the HMBS family. Monomer. Requires dipyrromethane as cofactor.

The catalysed reaction is 4 porphobilinogen + H2O = hydroxymethylbilane + 4 NH4(+). The protein operates within porphyrin-containing compound metabolism; protoporphyrin-IX biosynthesis; coproporphyrinogen-III from 5-aminolevulinate: step 2/4. Functionally, tetrapolymerization of the monopyrrole PBG into the hydroxymethylbilane pre-uroporphyrinogen in several discrete steps. The chain is Porphobilinogen deaminase from Wolbachia sp. subsp. Drosophila simulans (strain wRi).